We begin with the raw amino-acid sequence, 323 residues long: Oligodendrocyte transcription factor 2 (323 aa).

Polar residues-rich tracts occupy residues 1–13 (MDSD…SRPS) and 27–45 (KGSS…STPS). Positions 1–107 (MDSDASLVSS…KKQMTEPELQ (107 aa)) are disordered. Residues 76–93 (KSSSSSTSSSTSSAAASS) are compositionally biased toward low complexity. One can recognise a bHLH domain in the interval 108–162 (QLRLKINSRERKRMHDLNIAMDGLREVMPYAHGPSVRKLSKIATLLLARNYILML).

Interacts with NKX2-2. Interacts with ZNF488. In terms of tissue distribution, expressed in the brain, in oligodendrocytes. Strongly expressed in oligodendrogliomas, while expression is weak to moderate in astrocytomas. Expression in glioblastomas highly variable.

The protein localises to the nucleus. It localises to the cytoplasm. Its function is as follows. Required for oligodendrocyte and motor neuron specification in the spinal cord, as well as for the development of somatic motor neurons in the hindbrain. Functions together with ZNF488 to promote oligodendrocyte differentiation. Cooperates with OLIG1 to establish the pMN domain of the embryonic neural tube. Antagonist of V2 interneuron and of NKX2-2-induced V3 interneuron development. In Homo sapiens (Human), this protein is Oligodendrocyte transcription factor 2 (OLIG2).